The following is a 622-amino-acid chain: UvrABC system protein C (622 aa).

The region spanning 12 to 91 (SSPGVYIMKD…IKKYRPKYNF (80 aa)) is the GIY-YIG domain. Positions 201 to 236 (REILKIFRERMSAAAAAEKYEKAARFRDLIRSIEVT) constitute a UVR domain.

Belongs to the UvrC family. Interacts with UvrB in an incision complex.

It localises to the cytoplasm. In terms of biological role, the UvrABC repair system catalyzes the recognition and processing of DNA lesions. UvrC both incises the 5' and 3' sides of the lesion. The N-terminal half is responsible for the 3' incision and the C-terminal half is responsible for the 5' incision. In Geotalea daltonii (strain DSM 22248 / JCM 15807 / FRC-32) (Geobacter daltonii), this protein is UvrABC system protein C.